The primary structure comprises 369 residues: Tsukushi (369 aa).

An N-terminal signal peptide occupies residues 1–19 (MQFLAWFNMLLLLPCFSTT). The LRRNT domain occupies 20–60 (KTCFPGCHCEVESFGLFDSFSLTKVDCSGIGSHIVPVPIPL). LRR repeat units lie at residues 61–81 (DTSY…SMLT), 87–108 (TLVS…TFSR), 111–132 (YLES…CFSS), 134–155 (PLGD…VFAS), 161–181 (PLNV…HEKS), 184–205 (NIQN…QGIP), 206–226 (LRYL…DFKG), 229–248 (GLIH…SPYS), 254–276 (ALQV…VIFG), 279–300 (SIQE…VLKY), and 303–323 (SLKS…KEGQ). N-linked (GlcNAc...) asparagine glycosylation is present at Asn76. Residue Asn189 is glycosylated (N-linked (GlcNAc...) asparagine). The N-linked (GlcNAc...) asparagine glycan is linked to Asn284.

Forms a ternary complex with chordin/CHRD and BMP4. As to quaternary structure, interacts with FZD4 (via FZ domain); competes with WNT2B for binding to FZD4, inhibiting Wnt signaling and repressing peripheral eye development. Interacts with BMP4; shows stronger interaction with BMP4 than isoform 2. Interacts with DVR1/VG1; the interaction is inhibited by BMP4. Interacts with BMP7. In terms of assembly, interacts with FZD4 (via FZ domain); competes with WNT2B for binding to FZD4, inhibiting Wnt signaling and repressing peripheral eye development. Interacts with BMP4; shows weaker interaction with BMP4 than isoform 1. Interacts with DVR1/VG1; the interaction is inhibited by BMP4. Interacts with BMP7. N-glycosylated. During embryonic development, expressed in the middle primitive streak and Hensen's node. Expressed in the peripheral region of the developing eye. Expressed in the presomitic mesoderm during somitogenesis in a NOTCH-dependent manner.

The protein resides in the secreted. Functionally, contributes to various developmental events through its interactions with multiple signaling pathways. Dorsalizing factor involved in the induction of Hensen's node by inhibiting bone morphogenetic proteins during gastrulation and by enhancing DVR1/VG1 activity. Wnt signaling inhibitor which competes with WNT2B for binding to Wnt receptor FZD4 and represses WNT2B-dependent development of the peripheral eye. In terms of biological role, shows strong bone morphogenetic protein antagonistic activity. Its function is as follows. Shows weak bone morphogenetic protein antagonistic activity. The chain is Tsukushi (TSKU) from Gallus gallus (Chicken).